The primary structure comprises 282 residues: ATP phosphoribosyltransferase (282 aa).

The protein belongs to the ATP phosphoribosyltransferase family. Long subfamily. Requires Mg(2+) as cofactor.

The protein resides in the cytoplasm. It carries out the reaction 1-(5-phospho-beta-D-ribosyl)-ATP + diphosphate = 5-phospho-alpha-D-ribose 1-diphosphate + ATP. The protein operates within amino-acid biosynthesis; L-histidine biosynthesis; L-histidine from 5-phospho-alpha-D-ribose 1-diphosphate: step 1/9. Feedback inhibited by histidine. Catalyzes the condensation of ATP and 5-phosphoribose 1-diphosphate to form N'-(5'-phosphoribosyl)-ATP (PR-ATP). Has a crucial role in the pathway because the rate of histidine biosynthesis seems to be controlled primarily by regulation of HisG enzymatic activity. This chain is ATP phosphoribosyltransferase, found in Pyrobaculum calidifontis (strain DSM 21063 / JCM 11548 / VA1).